A 102-amino-acid polypeptide reads, in one-letter code: Small ribosomal subunit protein uS10 (102 aa).

Belongs to the universal ribosomal protein uS10 family. In terms of assembly, part of the 30S ribosomal subunit.

Involved in the binding of tRNA to the ribosomes. In Lactobacillus gasseri (strain ATCC 33323 / DSM 20243 / BCRC 14619 / CIP 102991 / JCM 1131 / KCTC 3163 / NCIMB 11718 / NCTC 13722 / AM63), this protein is Small ribosomal subunit protein uS10.